Reading from the N-terminus, the 369-residue chain is Chanoclavine-I aldehyde reductase fgaOx3 (369 aa).

Residues 23–25 (PMT), Ala-58, Gln-100, and His-169 contribute to the FMN site. Substrate is bound by residues His-169 and Asn-172. Tyr-174 acts as the Proton donor in catalysis. FMN contacts are provided by residues Gly-292, 316-317 (GR), and Arg-317. Residue Tyr-344 coordinates substrate.

This sequence belongs to the NADH:flavin oxidoreductase/NADH oxidase family. In terms of assembly, monomer. FMN is required as a cofactor.

It catalyses the reaction dihydrochanoclavine-I aldehyde + NADP(+) = chanoclavine-I aldehyde + NADPH + H(+). It functions in the pathway alkaloid biosynthesis; ergot alkaloid biosynthesis. Chanoclavine-I aldehyde reductase; part of the gene cluster that mediates the biosynthesis of isofumigaclavines, fungal ergot alkaloids. The tryptophan dimethylallyltransferase ifgA catalyzes the first step of ergot alkaloid biosynthesis by condensing dimethylallyl diphosphate (DMAP) and tryptophan to form 4-dimethylallyl-L-tryptophan. The second step is catalyzed by the methyltransferase ifgB that methylates 4-dimethylallyl-L-tryptophan in the presence of S-adenosyl-L-methionine, resulting in the formation of N-methyl-dimethylallyl-L-tryptophan. The catalase ifgD and the FAD-dependent oxidoreductase ifgC then transform N-methyl-dimethylallyl-L-tryptophan to chanoclavine-I which is further oxidized by ifgE in the presence of NAD(+), resulting in the formation of chanoclavine-I aldehyde. The chanoclavine-I aldehyde reductases ifgG and/or fgaOx3 reduce chanoclavine-I aldehyde to dihydrochanoclavine-I aldehyde that spontaneously dehydrates to form 6,8-dimethyl-6,7-didehydroergoline. The festuclavine dehydrogenases ifgF1 and/or ifgF2 then catalyze the reduction of 6,8-dimethyl-6,7-didehydroergoline to form festuclavine. Hydrolysis of festuclavine by a yet undetermined cytochrome P450 monooxygenase (called ifgH) then leads to the formation of isofumigaclavine B which is in turn acetylated by ifgI to isofumigaclavine A. Penicillium roqueforti has interestingly at least two sets of genes for the consumption of chanoclavine-I aldehyde on three different loci, the OYEs ifgG/fgaOx3 and the festuclavine synthase homologs ifgF1/ifgF2. The reason for the duplication of these genes is unclear, probably to ensure the conversion of chanoclavine-I aldehyde by differential gene expression under various environmental conditions. In Penicillium roqueforti (strain FM164), this protein is Chanoclavine-I aldehyde reductase fgaOx3.